Here is a 184-residue protein sequence, read N- to C-terminus: Large ribosomal subunit protein uL6 (184 aa).

It belongs to the universal ribosomal protein uL6 family. Part of the 50S ribosomal subunit.

This protein binds to the 23S rRNA, and is important in its secondary structure. It is located near the subunit interface in the base of the L7/L12 stalk, and near the tRNA binding site of the peptidyltransferase center. The polypeptide is Large ribosomal subunit protein uL6 (Methanosphaera stadtmanae (strain ATCC 43021 / DSM 3091 / JCM 11832 / MCB-3)).